Here is a 587-residue protein sequence, read N- to C-terminus: Estrogen receptor (587 aa).

The segment at 1-176 (MTLHTKTSGV…SMESTKETRY (176 aa)) is modulating (transactivation AF-1). 2 consecutive NR C4-type zinc fingers follow at residues 177–197 (CAVCNDYASGYHYGVWSCEGC) and 213–237 (CPATNQCTIDKNRRKSCQACRLRKC). A DNA-binding region (nuclear receptor) is located at residues 177–242 (CAVCNDYASG…RLRKCYEVGM (66 aa)). The tract at residues 243–302 (MKGGIRKDRRGGRVMKQKRQREEQDSRNGEASSTELRAPTLWASPLVVKHNKKNSPALSL) is hinge. Positions 248–277 (RKDRRGGRVMKQKRQREEQDSRNGEASSTE) are disordered. The span at 249–261 (KDRRGGRVMKQKR) shows a compositional bias: basic residues. Residues 303–539 (TAEQMVSALL…DLLLEMLDAH (237 aa)) form the NR LBD domain. The tract at residues 303-587 (TAEQMVSALL…KEEENMQNTL (285 aa)) is transactivation AF-2.

It belongs to the nuclear hormone receptor family. NR3 subfamily. In terms of assembly, binds DNA as a homodimer. Can form a heterodimer with ER-beta.

Its subcellular location is the nucleus. Functionally, the steroid hormones and their receptors are involved in the regulation of eukaryotic gene expression and affect cellular proliferation and differentiation in target tissues. This Taeniopygia guttata (Zebra finch) protein is Estrogen receptor (ESR1).